The chain runs to 309 residues: Malate dehydrogenase (309 aa).

NAD(+) contacts are provided by residues 6 to 11 and Asp-31; that span reads GSGRVG. Residues Arg-80 and Arg-86 each coordinate substrate. Residues Asn-93 and 116–118 contribute to the NAD(+) site; that span reads TTN. Asn-118 and Arg-149 together coordinate substrate. His-173 functions as the Proton acceptor in the catalytic mechanism.

The protein belongs to the LDH/MDH superfamily. In terms of assembly, homotetramer.

It carries out the reaction (S)-malate + NAD(+) = oxaloacetate + NADH + H(+). Functionally, catalyzes the reversible oxidation of malate to oxaloacetate. Exhibits higher specific activity for oxaloacetate reduction than for malate oxidation in vitro. Has a strong preference for NAD. Can use NADPH for oxaloacetate reduction, but activity decreases more than 90%. No activity detected with NADP(+) and malate. The polypeptide is Malate dehydrogenase (Pyrobaculum islandicum (strain DSM 4184 / JCM 9189 / GEO3)).